A 142-amino-acid polypeptide reads, in one-letter code: Mediator of RNA polymerase II transcription subunit 21 (142 aa).

The stretch at 87-131 (AEEQLSRIDSLQKKLIQVEGEKIEAIKRKESLTKDIEELINEFTE) forms a coiled coil.

The protein belongs to the Mediator complex subunit 21 family. In terms of assembly, component of the Mediator complex.

The protein resides in the nucleus. Component of the Mediator complex, a coactivator involved in the regulated transcription of nearly all RNA polymerase II-dependent genes. Mediator functions as a bridge to convey information from gene-specific regulatory proteins to the basal RNA polymerase II transcription machinery. Mediator is recruited to promoters by direct interactions with regulatory proteins and serves as a scaffold for the assembly of a functional preinitiation complex with RNA polymerase II and the general transcription factors. The protein is Mediator of RNA polymerase II transcription subunit 21 (SRB7) of Eremothecium gossypii (strain ATCC 10895 / CBS 109.51 / FGSC 9923 / NRRL Y-1056) (Yeast).